We begin with the raw amino-acid sequence, 873 residues long: Cyanophycin synthetase (873 aa).

Positions 224–480 constitute an ATP-grasp domain; the sequence is KTILQDAGIP…VAAPVLDMLF (257 aa). Residue 495–501 coordinates ATP; it reads GTNGKTT.

It in the C-terminal section; belongs to the MurCDEF family. In terms of assembly, homodimer.

The enzyme catalyses [L-4-(L-arginin-2-N-yl)aspartate](n) + L-aspartate + ATP = [L-4-(L-arginin-2-N-yl)aspartate](n)-L-aspartate + ADP + phosphate + H(+). It catalyses the reaction [L-4-(L-arginin-2-N-yl)aspartate](n)-L-aspartate + L-arginine + ATP = [L-4-(L-arginin-2-N-yl)aspartate](n+1) + ADP + phosphate + H(+). Its function is as follows. Catalyzes the ATP-dependent polymerization of arginine and aspartate to multi-L-arginyl-poly-L-aspartic acid (cyanophycin; a water-insoluble reserve polymer). In Synechocystis sp. (strain ATCC 27184 / PCC 6803 / Kazusa), this protein is Cyanophycin synthetase (cphA).